Reading from the N-terminus, the 469-residue chain is Glutamate--tRNA ligase 2 (469 aa).

Positions 11–21 (PSPTGHLHLGG) match the 'HIGH' region motif. The 'KMSKS' region signature appears at 238–242 (KLSKR). Lysine 241 contributes to the ATP binding site.

It belongs to the class-I aminoacyl-tRNA synthetase family. Glutamate--tRNA ligase type 1 subfamily. Monomer.

It is found in the cytoplasm. The catalysed reaction is tRNA(Glu) + L-glutamate + ATP = L-glutamyl-tRNA(Glu) + AMP + diphosphate. In terms of biological role, catalyzes the attachment of glutamate to tRNA(Glu) in a two-step reaction: glutamate is first activated by ATP to form Glu-AMP and then transferred to the acceptor end of tRNA(Glu). This chain is Glutamate--tRNA ligase 2, found in Ehrlichia chaffeensis (strain ATCC CRL-10679 / Arkansas).